A 391-amino-acid polypeptide reads, in one-letter code: NADH-quinone oxidoreductase subunit D (391 aa).

It belongs to the complex I 49 kDa subunit family. NDH-1 is composed of 14 different subunits. Subunits NuoB, C, D, E, F, and G constitute the peripheral sector of the complex.

The protein localises to the cell inner membrane. It catalyses the reaction a quinone + NADH + 5 H(+)(in) = a quinol + NAD(+) + 4 H(+)(out). Functionally, NDH-1 shuttles electrons from NADH, via FMN and iron-sulfur (Fe-S) centers, to quinones in the respiratory chain. The immediate electron acceptor for the enzyme in this species is believed to be ubiquinone. Couples the redox reaction to proton translocation (for every two electrons transferred, four hydrogen ions are translocated across the cytoplasmic membrane), and thus conserves the redox energy in a proton gradient. This chain is NADH-quinone oxidoreductase subunit D, found in Rickettsia bellii (strain OSU 85-389).